The sequence spans 153 residues: Pro-corazonin (153 aa).

Residues 1-20 (MLRLLLLPLFLFTLSMACMG) form the signal peptide. Q21 carries the pyrrolidone carboxylic acid modification. N31 is subject to Asparagine amide. Residues 64-153 (LERCLLQLQH…AVEPNDYGKH (90 aa)) constitute a propeptide that is removed on maturation.

Belongs to the corazonin family. As to expression, expression is restricted to 24 neurons in the larval CNS (8 in the brain and 16 in the ventral nerve cord) and 12-16 neurons in the pars lateralis of the adult brain.

It is found in the secreted. Cardioactive peptide. Corazonin is probably involved in the physiological regulation of the heart beat. Clock (Clk) and cycle (cyc) proteins negatively regulate Crz transcription in a cell-specific manner. In Drosophila virilis (Fruit fly), this protein is Pro-corazonin (Crz).